A 391-amino-acid polypeptide reads, in one-letter code: GTPase Obg (391 aa).

The Obg domain occupies 1–159 (MKFLDQAKIF…IWVWLRLKLI (159 aa)). The 168-residue stretch at 160 to 327 (ADAGLIGLPN…VLRVMATHVD (168 aa)) folds into the OBG-type G domain. GTP contacts are provided by residues 166 to 173 (GLPNAGKS), 191 to 195 (FTTLH), 212 to 215 (DIPG), 279 to 282 (SKID), and 308 to 310 (SAI). The Mg(2+) site is built by serine 173 and threonine 193. The disordered stretch occupies residues 352 to 391 (TGIDHGYNRPSAVVDWEDAPFDDDDDDDGDESGDKGQWTR). A compositionally biased stretch (acidic residues) spans 366–382 (DWEDAPFDDDDDDDGDE).

Belongs to the TRAFAC class OBG-HflX-like GTPase superfamily. OBG GTPase family. Monomer. It depends on Mg(2+) as a cofactor.

It localises to the cytoplasm. Functionally, an essential GTPase which binds GTP, GDP and possibly (p)ppGpp with moderate affinity, with high nucleotide exchange rates and a fairly low GTP hydrolysis rate. Plays a role in control of the cell cycle, stress response, ribosome biogenesis and in those bacteria that undergo differentiation, in morphogenesis control. In Rhodospirillum rubrum (strain ATCC 11170 / ATH 1.1.1 / DSM 467 / LMG 4362 / NCIMB 8255 / S1), this protein is GTPase Obg.